A 359-amino-acid chain; its full sequence is Chorismate synthase (359 aa).

Position 47 (Arg47) interacts with NADP(+). FMN contacts are provided by residues 123–125, Gly283, 298–302, and Arg326; these read RSS and KPTSS.

Belongs to the chorismate synthase family. In terms of assembly, homotetramer. FMNH2 is required as a cofactor.

It catalyses the reaction 5-O-(1-carboxyvinyl)-3-phosphoshikimate = chorismate + phosphate. Its pathway is metabolic intermediate biosynthesis; chorismate biosynthesis; chorismate from D-erythrose 4-phosphate and phosphoenolpyruvate: step 7/7. Its function is as follows. Catalyzes the anti-1,4-elimination of the C-3 phosphate and the C-6 proR hydrogen from 5-enolpyruvylshikimate-3-phosphate (EPSP) to yield chorismate, which is the branch point compound that serves as the starting substrate for the three terminal pathways of aromatic amino acid biosynthesis. This reaction introduces a second double bond into the aromatic ring system. The polypeptide is Chorismate synthase (Chlamydia pneumoniae (Chlamydophila pneumoniae)).